A 280-amino-acid polypeptide reads, in one-letter code: MSRYTDMFTRLDEAGEGAFVPFIMLNDPSPEDSFQIISTAIEAGADALELGVPFSDPVADGPTVAESHLRALDGGSTVDSCLALIARVREAYPEIPIGMLIYGNVPFTRGLDKFYREFAEAGADSILLPDVPVREGAPFIQAAEGAGIDPIFIAPAQASETTLEGVSAASKGYIYAISRDGVTGTERESSTTGLTDVVDNIKRFGGAPILLGFGISSPKHVADAIAAGAAGAITGSAITKIIASHCEGEHPNPSTITDPEGLRKELTEFISAMKAATKKQ.

Active-site proton acceptor residues include Glu-49 and Asp-60.

This sequence belongs to the TrpA family. Tetramer of two alpha and two beta chains.

It catalyses the reaction (1S,2R)-1-C-(indol-3-yl)glycerol 3-phosphate + L-serine = D-glyceraldehyde 3-phosphate + L-tryptophan + H2O. It participates in amino-acid biosynthesis; L-tryptophan biosynthesis; L-tryptophan from chorismate: step 5/5. The alpha subunit is responsible for the aldol cleavage of indoleglycerol phosphate to indole and glyceraldehyde 3-phosphate. The protein is Tryptophan synthase alpha chain of Corynebacterium efficiens (strain DSM 44549 / YS-314 / AJ 12310 / JCM 11189 / NBRC 100395).